The chain runs to 284 residues: Pantothenate synthetase (284 aa).

Position 30 to 37 (30 to 37) interacts with ATP; that stretch reads MGNLHDGH. Residue His37 is the Proton donor of the active site. Gln61 lines the (R)-pantoate pocket. Beta-alanine is bound at residue Gln61. ATP is bound at residue 149 to 152; that stretch reads GEKD. Gln155 provides a ligand contact to (R)-pantoate. ATP contacts are provided by residues Val178 and 186–189; that span reads LSSR.

The protein belongs to the pantothenate synthetase family. In terms of assembly, homodimer.

It localises to the cytoplasm. The catalysed reaction is (R)-pantoate + beta-alanine + ATP = (R)-pantothenate + AMP + diphosphate + H(+). The protein operates within cofactor biosynthesis; (R)-pantothenate biosynthesis; (R)-pantothenate from (R)-pantoate and beta-alanine: step 1/1. Its function is as follows. Catalyzes the condensation of pantoate with beta-alanine in an ATP-dependent reaction via a pantoyl-adenylate intermediate. The chain is Pantothenate synthetase from Klebsiella pneumoniae (strain 342).